Here is a 637-residue protein sequence, read N- to C-terminus: DNA gyrase subunit B (637 aa).

The Toprim domain occupies 420-534 (CEIYIVEGDS…EGHVFIAQPP (115 aa)). Mg(2+) is bound by residues glutamate 426, aspartate 499, and aspartate 501.

It belongs to the type II topoisomerase GyrB family. Heterotetramer, composed of two GyrA and two GyrB chains. In the heterotetramer, GyrA contains the active site tyrosine that forms a transient covalent intermediate with DNA, while GyrB binds cofactors and catalyzes ATP hydrolysis. It depends on Mg(2+) as a cofactor. Mn(2+) is required as a cofactor. Ca(2+) serves as cofactor.

Its subcellular location is the cytoplasm. The enzyme catalyses ATP-dependent breakage, passage and rejoining of double-stranded DNA.. A type II topoisomerase that negatively supercoils closed circular double-stranded (ds) DNA in an ATP-dependent manner to modulate DNA topology and maintain chromosomes in an underwound state. Negative supercoiling favors strand separation, and DNA replication, transcription, recombination and repair, all of which involve strand separation. Also able to catalyze the interconversion of other topological isomers of dsDNA rings, including catenanes and knotted rings. Type II topoisomerases break and join 2 DNA strands simultaneously in an ATP-dependent manner. The sequence is that of DNA gyrase subunit B from Clostridium acetobutylicum (strain ATCC 824 / DSM 792 / JCM 1419 / IAM 19013 / LMG 5710 / NBRC 13948 / NRRL B-527 / VKM B-1787 / 2291 / W).